A 207-amino-acid chain; its full sequence is dTTP/UTP pyrophosphatase (207 aa).

Asp-79 acts as the Proton acceptor in catalysis.

The protein belongs to the Maf family. YhdE subfamily. A divalent metal cation serves as cofactor.

The protein localises to the cytoplasm. The enzyme catalyses dTTP + H2O = dTMP + diphosphate + H(+). It catalyses the reaction UTP + H2O = UMP + diphosphate + H(+). Its function is as follows. Nucleoside triphosphate pyrophosphatase that hydrolyzes dTTP and UTP. May have a dual role in cell division arrest and in preventing the incorporation of modified nucleotides into cellular nucleic acids. In Nitrobacter hamburgensis (strain DSM 10229 / NCIMB 13809 / X14), this protein is dTTP/UTP pyrophosphatase.